Consider the following 425-residue polypeptide: Glutamyl-tRNA reductase (425 aa).

Substrate-binding positions include 49–52 (TCNR), Ser-107, 112–114 (EPQ), and Gln-118. Cys-50 acts as the Nucleophile in catalysis. 187-192 (GAGETI) lines the NADP(+) pocket.

The protein belongs to the glutamyl-tRNA reductase family. As to quaternary structure, homodimer.

It carries out the reaction (S)-4-amino-5-oxopentanoate + tRNA(Glu) + NADP(+) = L-glutamyl-tRNA(Glu) + NADPH + H(+). The protein operates within porphyrin-containing compound metabolism; protoporphyrin-IX biosynthesis; 5-aminolevulinate from L-glutamyl-tRNA(Glu): step 1/2. Functionally, catalyzes the NADPH-dependent reduction of glutamyl-tRNA(Glu) to glutamate 1-semialdehyde (GSA). The chain is Glutamyl-tRNA reductase from Pseudomonas savastanoi pv. phaseolicola (strain 1448A / Race 6) (Pseudomonas syringae pv. phaseolicola (strain 1448A / Race 6)).